Here is a 372-residue protein sequence, read N- to C-terminus: Glutamate 5-kinase (372 aa).

ATP is bound at residue lysine 14. Positions 54, 141, and 153 each coordinate substrate. Residues 173–174 (TD) and 215–221 (SGGMLTK) contribute to the ATP site. Positions 280-358 (AGKVVVDEGA…HEIEHILGYI (79 aa)) constitute a PUA domain.

This sequence belongs to the glutamate 5-kinase family.

The protein localises to the cytoplasm. It catalyses the reaction L-glutamate + ATP = L-glutamyl 5-phosphate + ADP. It participates in amino-acid biosynthesis; L-proline biosynthesis; L-glutamate 5-semialdehyde from L-glutamate: step 1/2. Functionally, catalyzes the transfer of a phosphate group to glutamate to form L-glutamate 5-phosphate. The chain is Glutamate 5-kinase from Methylobacillus flagellatus (strain ATCC 51484 / DSM 6875 / VKM B-1610 / KT).